An 83-amino-acid chain; its full sequence is Retinal cone rhodopsin-sensitive cGMP 3',5'-cyclic phosphodiesterase subunit gamma (83 aa).

Over residues 1-19 the composition is skewed to low complexity; the sequence is MSDNTTLAPPAASQAPATP. The segment at 1–51 is disordered; sequence MSDNTTLAPPAASQAPATPRKGPPKFKQRQTRQFKSKPPKKGVKGFGDDIP. The segment covering 22–43 has biased composition (basic residues); it reads GPPKFKQRQTRQFKSKPPKKGV.

The protein belongs to the rod/cone cGMP-PDE gamma subunit family. In terms of assembly, tetramer composed of two catalytic chains (alpha and beta), and two inhibitory chains (gamma).

The enzyme catalyses 3',5'-cyclic GMP + H2O = GMP + H(+). Participates in processes of transmission and amplification of the visual signal. cGMP-PDEs are the effector molecules in G-protein-mediated phototransduction in vertebrate rods and cones. In Ictidomys tridecemlineatus (Thirteen-lined ground squirrel), this protein is Retinal cone rhodopsin-sensitive cGMP 3',5'-cyclic phosphodiesterase subunit gamma (PDE6H).